A 443-amino-acid chain; its full sequence is ATP-dependent protease ATPase subunit HslU (443 aa).

Residues isoleucine 18 and 60 to 65 (GVGKTE) contribute to the ATP site. The segment at 138–158 (PAENQWGEKEQNEDKGTRQTF) is disordered. The segment covering 143–154 (WGEKEQNEDKGT) has biased composition (basic and acidic residues). Aspartate 255, glutamate 321, and arginine 393 together coordinate ATP.

The protein belongs to the ClpX chaperone family. HslU subfamily. A double ring-shaped homohexamer of HslV is capped on each side by a ring-shaped HslU homohexamer. The assembly of the HslU/HslV complex is dependent on binding of ATP.

The protein resides in the cytoplasm. Its function is as follows. ATPase subunit of a proteasome-like degradation complex; this subunit has chaperone activity. The binding of ATP and its subsequent hydrolysis by HslU are essential for unfolding of protein substrates subsequently hydrolyzed by HslV. HslU recognizes the N-terminal part of its protein substrates and unfolds these before they are guided to HslV for hydrolysis. The chain is ATP-dependent protease ATPase subunit HslU from Pseudoalteromonas atlantica (strain T6c / ATCC BAA-1087).